Reading from the N-terminus, the 280-residue chain is Putative transcription factor kapC (280 aa).

Residues 1-102 (MQPALAPHPS…GKRPLSTSKR (102 aa)) form a disordered region. Positions 39-49 (PQPPAPQPPHM) are enriched in pro residues. Residues 79–89 (TQPDVTGQETP) show a composition bias toward polar residues. Residues 96–159 (PLSTSKRAAQ…EYIINLQSRL (64 aa)) form the bZIP domain. Residues 97–120 (LSTSKRAAQNRAAQRAFRQRKEAH) are basic motif. The segment at 124–155 (LEGKVKAYESMGEAIKALQAENYQLREYIINL) is leucine-zipper. A disordered region spans residues 169 to 280 (LPGNIDLSQP…EQTHGLPLIS (112 aa)). Pro residues predominate over residues 197–206 (APPPTAPQQP).

It belongs to the bZIP family.

It is found in the nucleus. In terms of biological role, putative transcription factor. The sequence is that of Putative transcription factor kapC (kapC) from Aspergillus fumigatus (strain ATCC MYA-4609 / CBS 101355 / FGSC A1100 / Af293) (Neosartorya fumigata).